The primary structure comprises 332 residues: Glycerol-3-phosphate dehydrogenase [NAD(P)+] (332 aa).

Residues W11, R30, and K108 each contribute to the NADPH site. 3 residues coordinate sn-glycerol 3-phosphate: K108, G137, and S139. A141 contacts NADPH. Sn-glycerol 3-phosphate-binding residues include K192, D245, S255, R256, and N257. Residue K192 is the Proton acceptor of the active site. Position 256 (R256) interacts with NADPH. NADPH-binding residues include V280 and E282.

It belongs to the NAD-dependent glycerol-3-phosphate dehydrogenase family.

The protein resides in the cytoplasm. The enzyme catalyses sn-glycerol 3-phosphate + NAD(+) = dihydroxyacetone phosphate + NADH + H(+). The catalysed reaction is sn-glycerol 3-phosphate + NADP(+) = dihydroxyacetone phosphate + NADPH + H(+). It functions in the pathway membrane lipid metabolism; glycerophospholipid metabolism. In terms of biological role, catalyzes the reduction of the glycolytic intermediate dihydroxyacetone phosphate (DHAP) to sn-glycerol 3-phosphate (G3P), the key precursor for phospholipid synthesis. This Burkholderia orbicola (strain MC0-3) protein is Glycerol-3-phosphate dehydrogenase [NAD(P)+].